An 864-amino-acid chain; its full sequence is Calphotin (864 aa).

A leucine-zipper region spans residues 816 to 858 (LQTTDVSLLAIAATLDAIGEKLKDQKARNQQVMDRLCEIEKIL).

As to quaternary structure, homodimer. Soma and axons of photoreceptor cells of compound eyes and ocelli.

It is found in the cytoplasm. Its function is as follows. Plays important roles in both rhabdomere development and in photoreceptor cell survival. Might function as a calcium-sequestering 'sponge' to regulate the amount of free cytoplasmic calcium. It binds 0.3 mole of Ca(2+) per mole of protein. The sequence is that of Calphotin (Cpn) from Drosophila melanogaster (Fruit fly).